The primary structure comprises 132 residues: Large ribosomal subunit protein bL17 (132 aa).

Belongs to the bacterial ribosomal protein bL17 family. In terms of assembly, part of the 50S ribosomal subunit. Contacts protein L32.

This chain is Large ribosomal subunit protein bL17, found in Shewanella woodyi (strain ATCC 51908 / MS32).